The chain runs to 250 residues: Copper homeostasis protein cutC homolog (250 aa).

This sequence belongs to the CutC family.

Functionally, involved in copper homeostasis. Affects body morphology and length, egg laying and brood size. This chain is Copper homeostasis protein cutC homolog (cutc-1), found in Caenorhabditis elegans.